The primary structure comprises 559 residues: 2,3-bisphosphoglycerate-independent phosphoglycerate mutase (559 aa).

Mn(2+)-binding residues include D28 and S81. The active-site Phosphoserine intermediate is the S81. Substrate-binding positions include H140, 170–171 (RD), R206, R213, 286–289 (RADR), and K361. Mn(2+)-binding residues include D430, H434, D471, H472, and H501.

This sequence belongs to the BPG-independent phosphoglycerate mutase family. Monomer. Mn(2+) is required as a cofactor. Found ubiquitously in germinating seed.

The protein localises to the cytoplasm. It carries out the reaction (2R)-2-phosphoglycerate = (2R)-3-phosphoglycerate. Its pathway is carbohydrate degradation; glycolysis; pyruvate from D-glyceraldehyde 3-phosphate: step 3/5. Catalyzes the interconversion of 2-phosphoglycerate and 3-phosphoglycerate. In Nicotiana tabacum (Common tobacco), this protein is 2,3-bisphosphoglycerate-independent phosphoglycerate mutase.